Consider the following 311-residue polypeptide: HPr kinase/phosphorylase (311 aa).

Residues His-138 and Lys-159 contribute to the active site. ATP is bound at residue 153–160 (GDSGIGKS). Ser-160 serves as a coordination point for Mg(2+). Asp-177 functions as the Proton acceptor; for phosphorylation activity. Proton donor; for dephosphorylation activity in the catalytic mechanism. The segment at 201-210 (IEIRGVGIID) is important for the catalytic mechanism of both phosphorylation and dephosphorylation. Glu-202 lines the Mg(2+) pocket. Arg-243 is an active-site residue. The tract at residues 264-269 (PVKTGR) is important for the catalytic mechanism of dephosphorylation.

Belongs to the HPrK/P family. As to quaternary structure, homohexamer. The cofactor is Mg(2+).

It catalyses the reaction [HPr protein]-L-serine + ATP = [HPr protein]-O-phospho-L-serine + ADP + H(+). The catalysed reaction is [HPr protein]-O-phospho-L-serine + phosphate + H(+) = [HPr protein]-L-serine + diphosphate. Catalyzes the ATP- as well as the pyrophosphate-dependent phosphorylation of a specific serine residue in HPr, a phosphocarrier protein of the phosphoenolpyruvate-dependent sugar phosphotransferase system (PTS). HprK/P also catalyzes the pyrophosphate-producing, inorganic phosphate-dependent dephosphorylation (phosphorolysis) of seryl-phosphorylated HPr (P-Ser-HPr). The two antagonistic activities of HprK/P are regulated by several intracellular metabolites, which change their concentration in response to the absence or presence of rapidly metabolisable carbon sources (glucose, fructose, etc.) in the growth medium. Therefore, by controlling the phosphorylation state of HPr, HPrK/P is a sensor enzyme that plays a major role in the regulation of carbon metabolism and sugar transport: it mediates carbon catabolite repression (CCR), and regulates PTS-catalyzed carbohydrate uptake and inducer exclusion. This chain is HPr kinase/phosphorylase, found in Streptococcus pneumoniae (strain 70585).